Consider the following 298-residue polypeptide: Homoserine kinase (298 aa).

83-93 (PISRGLGSSSS) contributes to the ATP binding site.

It belongs to the GHMP kinase family. Homoserine kinase subfamily.

It is found in the cytoplasm. It catalyses the reaction L-homoserine + ATP = O-phospho-L-homoserine + ADP + H(+). It participates in amino-acid biosynthesis; L-threonine biosynthesis; L-threonine from L-aspartate: step 4/5. Functionally, catalyzes the ATP-dependent phosphorylation of L-homoserine to L-homoserine phosphate. The polypeptide is Homoserine kinase (Clostridium botulinum (strain Eklund 17B / Type B)).